Here is a 235-residue protein sequence, read N- to C-terminus: Calcium-activated potassium channel subunit beta-2 (235 aa).

The segment at 1 to 45 (MFIWTSGRTSSSYRQDEKRNIYQKIRDHDLLDKRKTVTALKAGED) is ball and chain. Over 1 to 46 (MFIWTSGRTSSSYRQDEKRNIYQKIRDHDLLDKRKTVTALKAGEDR) the chain is Cytoplasmic. A helical membrane pass occupies residues 47 to 67 (AILLGLAMMVCSIMMYFLLGI). The Extracellular portion of the chain corresponds to 68–194 (TLLRSYMQSV…VILTKLYSSN (127 aa)). N-linked (GlcNAc...) asparagine glycans are attached at residues N88, N96, and N119. Residues 195–215 (VLFHSLFWPTCMMAGGVAIVA) traverse the membrane as a helical segment. Residues 216–235 (MVKLTQYLSLLCERIQRINR) lie on the Cytoplasmic side of the membrane.

The protein belongs to the KCNMB (TC 8.A.14.1) family. KCNMB2 subfamily. As to quaternary structure, interacts with KCNMA1 tetramer. There are probably 4 molecules of KCMNB2 per KCNMA1 tetramer. In terms of processing, N-glycosylated.

The protein localises to the membrane. Regulatory subunit of the calcium activated potassium KCNMA1 (maxiK) channel. Modulates the calcium sensitivity and gating kinetics of KCNMA1, thereby contributing to KCNMA1 channel diversity. Acts as a negative regulator that confers rapid and complete inactivation of KCNMA1 channel complex. The chain is Calcium-activated potassium channel subunit beta-2 (Kcnmb2) from Mus musculus (Mouse).